A 141-amino-acid chain; its full sequence is Large ribosomal subunit protein uL11 (141 aa).

This sequence belongs to the universal ribosomal protein uL11 family. As to quaternary structure, part of the ribosomal stalk of the 50S ribosomal subunit. Interacts with L10 and the large rRNA to form the base of the stalk. L10 forms an elongated spine to which L12 dimers bind in a sequential fashion forming a multimeric L10(L12)X complex. One or more lysine residues are methylated.

Functionally, forms part of the ribosomal stalk which helps the ribosome interact with GTP-bound translation factors. In Prochlorococcus marinus (strain NATL1A), this protein is Large ribosomal subunit protein uL11.